The following is a 209-amino-acid chain: uncharacterized protein (209 aa).

This is an uncharacterized protein from Caldicellulosiruptor saccharolyticus (Caldocellum saccharolyticum).